The following is a 435-amino-acid chain: Putative F-box/kelch-repeat protein At1g13200 (435 aa).

Positions 1–29 (MKDAEKREVIASSSLQRKRNRGRRLRKRR) are disordered. A compositionally biased stretch (basic residues) spans 16–29 (QRKRNRGRRLRKRR). In terms of domain architecture, F-box spans 37 to 82 (LMVPSSLPNDVLEEIFLRFPVKALIRLKSLSKQWRSTIESRSFEER). Kelch repeat units lie at residues 164 to 217 (SVYV…DYKL), 224 to 270 (DKYI…PASA), 273 to 317 (SVYW…HIDM), and 322 to 368 (NSLC…EKRD).

The polypeptide is Putative F-box/kelch-repeat protein At1g13200 (Arabidopsis thaliana (Mouse-ear cress)).